We begin with the raw amino-acid sequence, 194 residues long: Ubiquitin-conjugating enzyme E2 T (194 aa).

A UBC core domain is found at 2 to 152 (QRVSRLKREM…AKKWTAEHAI (151 aa)). The Glycyl thioester intermediate role is filled by Cys-86. Composition is skewed to basic and acidic residues over residues 158–170 (CVET…ENKN) and 185–194 (NLEHTKKVCL). Residues 158–194 (CVETDGKTPENKNLKTSHKREALSAQENLEHTKKVCL) are disordered.

It belongs to the ubiquitin-conjugating enzyme family.

The protein localises to the nucleus. It catalyses the reaction S-ubiquitinyl-[E1 ubiquitin-activating enzyme]-L-cysteine + [E2 ubiquitin-conjugating enzyme]-L-cysteine = [E1 ubiquitin-activating enzyme]-L-cysteine + S-ubiquitinyl-[E2 ubiquitin-conjugating enzyme]-L-cysteine.. It participates in protein modification; protein ubiquitination. Functionally, accepts ubiquitin from the E1 complex and catalyzes its covalent attachment to other proteins. Catalyzes monoubiquitination. Involved in DNA repair. The polypeptide is Ubiquitin-conjugating enzyme E2 T (ube2t) (Danio rerio (Zebrafish)).